A 141-amino-acid chain; its full sequence is MAKKVEKLVKLQIPAGKATPAPPVGPALGQAGINIMGFTKEFNARTADQAGMIIPVVISVYEDKSFDFITKTPPAAVLLKKAAGVEKGSGEPNKTKVATITRAQVQEIAETKMPDLNAANLESAMRMIEGTARSMGFTVTD.

The protein belongs to the universal ribosomal protein uL11 family. As to quaternary structure, part of the ribosomal stalk of the 50S ribosomal subunit. Interacts with L10 and the large rRNA to form the base of the stalk. L10 forms an elongated spine to which L12 dimers bind in a sequential fashion forming a multimeric L10(L12)X complex. In terms of processing, one or more lysine residues are methylated.

Its function is as follows. Forms part of the ribosomal stalk which helps the ribosome interact with GTP-bound translation factors. The polypeptide is Large ribosomal subunit protein uL11 (Streptococcus agalactiae serotype Ia (strain ATCC 27591 / A909 / CDC SS700)).